The following is a 90-amino-acid chain: Acyl-CoA-binding protein homolog (90 aa).

The ACB domain occupies 3–89 (LQEQFDQAAS…VESLIASLGL (87 aa)). Residues arginine 15, 30–34 (YALFK), lysine 53, lysine 57, and tyrosine 76 each bind an acyl-CoA.

It belongs to the ACBP family.

Functionally, binds medium- and long-chain acyl-CoA esters with very high affinity and may function as an intracellular carrier of acyl-CoA esters. This Manduca sexta (Tobacco hawkmoth) protein is Acyl-CoA-binding protein homolog.